A 591-amino-acid chain; its full sequence is V-type ATP synthase alpha chain (591 aa).

Residue 232–239 (GPFGAGKT) coordinates ATP.

The protein belongs to the ATPase alpha/beta chains family.

The catalysed reaction is ATP + H2O + 4 H(+)(in) = ADP + phosphate + 5 H(+)(out). In terms of biological role, produces ATP from ADP in the presence of a proton gradient across the membrane. The V-type alpha chain is a catalytic subunit. The sequence is that of V-type ATP synthase alpha chain from Nitrosococcus oceani (strain ATCC 19707 / BCRC 17464 / JCM 30415 / NCIMB 11848 / C-107).